The following is a 30-amino-acid chain: Cysteine-rich venom protein mossambin (30 aa).

Positions 1–30 (NVDFNSESTRRKKKQNEIVDLHNSLRRTVN) are disordered.

This sequence belongs to the CRISP family. Post-translationally, contains 8 disulfide bonds. Expressed by the venom gland.

The protein resides in the secreted. Inhibits calcium-activated potassium channels (KCa), voltage-gated potassium channel (Kv), and the calcium release channel/ryanodine receptor (RyR). This is Cysteine-rich venom protein mossambin from Naja mossambica (Mozambique spitting cobra).